Reading from the N-terminus, the 491-residue chain is Proline-rich protein PRCC (491 aa).

Residues 1 to 100 are mediates interaction with MAD2L2; it reads MSLVAYASSD…PPPPGVSPAE (100 aa). Disordered regions lie at residues 1-244, 260-313, and 432-454; these read MSLV…SPSA, ITQE…PAFQ, and EEKT…QRRK. Residues 10–26 are compositionally biased toward acidic residues; it reads DESEPDEAEPEPEEEEA. Positions 40-49 are enriched in low complexity; the sequence is ASLPAPKGPA. A compositionally biased stretch (pro residues) spans 50–96; that stretch reads LLPPPPQMLAPAFPPPLLLPPPTGDPRLQPPPPLPFGLGGFPPPPGV. Residues Ser-97, Ser-114, Ser-157, Ser-159, Ser-212, and Ser-218 each carry the phosphoserine modification. The span at 111–120 shows a compositional bias: low complexity; that stretch reads GLPSPRGPGL. The segment covering 230 to 244 has biased composition (low complexity); that stretch reads APVVGTTTTTPSPSA. Position 239 is a phosphothreonine (Thr-239). Residues Ser-241 and Ser-267 each carry the phosphoserine modification. Acidic residues predominate over residues 262–272; it reads QEEDDSDEEVA. Over residues 287 to 307 the composition is skewed to pro residues; it reads GVEPYPYPIPTVPEELPPGTE.

In terms of assembly, interacts with MAD2L2; the interaction is direct. As to expression, ubiquitous in fetal and adult tissues.

It localises to the nucleus. Its function is as follows. May regulate cell cycle progression through interaction with MAD2L2. In Homo sapiens (Human), this protein is Proline-rich protein PRCC (PRCC).